Reading from the N-terminus, the 625-residue chain is Glutamyl-tRNA(Gln) amidotransferase subunit E (625 aa).

This sequence belongs to the GatB/GatE family. GatE subfamily. As to quaternary structure, heterodimer of GatD and GatE.

The enzyme catalyses L-glutamyl-tRNA(Gln) + L-glutamine + ATP + H2O = L-glutaminyl-tRNA(Gln) + L-glutamate + ADP + phosphate + H(+). Functionally, allows the formation of correctly charged Gln-tRNA(Gln) through the transamidation of misacylated Glu-tRNA(Gln) in organisms which lack glutaminyl-tRNA synthetase. The reaction takes place in the presence of glutamine and ATP through an activated gamma-phospho-Glu-tRNA(Gln). The GatDE system is specific for glutamate and does not act on aspartate. This is Glutamyl-tRNA(Gln) amidotransferase subunit E from Caldivirga maquilingensis (strain ATCC 700844 / DSM 13496 / JCM 10307 / IC-167).